The primary structure comprises 255 residues: tRNA (guanine-N(7)-)-methyltransferase (255 aa).

Residues 1-30 (MMHDDPNEAGLPPDDAALPDEAADGADEVN) form a disordered region. A compositionally biased stretch (acidic residues) spans 17-27 (ALPDEAADGAD). S-adenosyl-L-methionine is bound by residues E86, E111, D138, and D161. Residue D161 is part of the active site. Substrate-binding positions include K165, D197, and 232-235 (TKFE).

It belongs to the class I-like SAM-binding methyltransferase superfamily. TrmB family.

It catalyses the reaction guanosine(46) in tRNA + S-adenosyl-L-methionine = N(7)-methylguanosine(46) in tRNA + S-adenosyl-L-homocysteine. It participates in tRNA modification; N(7)-methylguanine-tRNA biosynthesis. Catalyzes the formation of N(7)-methylguanine at position 46 (m7G46) in tRNA. The protein is tRNA (guanine-N(7)-)-methyltransferase of Burkholderia vietnamiensis (strain G4 / LMG 22486) (Burkholderia cepacia (strain R1808)).